Here is a 629-residue protein sequence, read N- to C-terminus: tRNA uridine 5-carboxymethylaminomethyl modification enzyme MnmG (629 aa).

FAD is bound by residues 13–18, valine 125, and serine 180; that span reads GGGHAG. 273–287 provides a ligand contact to NAD(+); it reads GPRYCPSIEDKIHRF. Glutamine 370 contacts FAD.

Belongs to the MnmG family. As to quaternary structure, homodimer. Heterotetramer of two MnmE and two MnmG subunits. It depends on FAD as a cofactor.

The protein localises to the cytoplasm. NAD-binding protein involved in the addition of a carboxymethylaminomethyl (cmnm) group at the wobble position (U34) of certain tRNAs, forming tRNA-cmnm(5)s(2)U34. The sequence is that of tRNA uridine 5-carboxymethylaminomethyl modification enzyme MnmG from Shewanella sp. (strain MR-7).